A 546-amino-acid polypeptide reads, in one-letter code: Hydroxylamine reductase (546 aa).

4 residues coordinate [4Fe-4S] cluster: Cys-3, Cys-6, Cys-18, and Cys-25. Residues His-245, Glu-269, Cys-313, Cys-401, Cys-429, Cys-454, Glu-488, and Lys-490 each contribute to the hybrid [4Fe-2O-2S] cluster site. Position 401 is a cysteine persulfide (Cys-401).

It belongs to the HCP family. Requires [4Fe-4S] cluster as cofactor. It depends on hybrid [4Fe-2O-2S] cluster as a cofactor.

It localises to the cytoplasm. The enzyme catalyses A + NH4(+) + H2O = hydroxylamine + AH2 + H(+). With respect to regulation, inhibited by cyanide and by sulfide and iron reagents such as dithioerythritol, 2,2'-dipyridyl and o-phenanthroline. Its function is as follows. Could be involved in assimilation and/or detoxification of hydroxylamine, which is a toxic compound that may be formed during nitrate/nitrite assimilation. Catalyzes the reduction of hydroxylamine to form NH(3) and H(2)O. It has a low reductase activity with FAD, FMN, benzyl viologen and bromphenol blue as electrons donors, but it is not able to use NAD or NADP. In Rhodobacter capsulatus (Rhodopseudomonas capsulata), this protein is Hydroxylamine reductase.